A 201-amino-acid chain; its full sequence is MRLFVGLGNPGSKYEGNRHNIGFMVVDEIARRHGFSPWRRRFQGETSEGVLGGERVVLLKPATYMNESGRAVQEAAKFFKLGESEVVVFHDEIELPPAKMRVKVGGGIAGHNGLRSISAHLGNEYRRVRLGVGHPGVKEIVHIHVLNDFAKSERPWVAALCETVAEHAELLVSGKDSQFQNRVHLAMDAKGFATENNGGKD.

Y14 lines the tRNA pocket. Residue H19 is the Proton acceptor of the active site. The tRNA site is built by Y64, N66, and N112.

It belongs to the PTH family. As to quaternary structure, monomer.

It localises to the cytoplasm. It carries out the reaction an N-acyl-L-alpha-aminoacyl-tRNA + H2O = an N-acyl-L-amino acid + a tRNA + H(+). Hydrolyzes ribosome-free peptidyl-tRNAs (with 1 or more amino acids incorporated), which drop off the ribosome during protein synthesis, or as a result of ribosome stalling. Its function is as follows. Catalyzes the release of premature peptidyl moieties from peptidyl-tRNA molecules trapped in stalled 50S ribosomal subunits, and thus maintains levels of free tRNAs and 50S ribosomes. The polypeptide is Peptidyl-tRNA hydrolase (Afipia carboxidovorans (strain ATCC 49405 / DSM 1227 / KCTC 32145 / OM5) (Oligotropha carboxidovorans)).